Reading from the N-terminus, the 252-residue chain is C4b-binding protein beta chain (252 aa).

An N-terminal signal peptide occupies residues 1 to 17 (MFFWCACCLMVAWRVSA). Sushi domains lie at 21-78 (EHCP…ECRL), 79-136 (GHCP…ICKS), and 137-193 (RDCD…VCKL). Cystine bridges form between Cys23–Cys63, Cys49–Cys76, Cys81–Cys121, Cys107–Cys134, Cys139–Cys179, and Cys165–Cys191. N-linked (GlcNAc...) asparagine glycosylation is found at Asn64, Asn71, Asn98, Asn117, and Asn154.

Disulfide-linked complex of alpha and beta chains of 3 possible sorts: a 570 kDa complex of 7 alpha chains and 1 beta chain, a 530 kDa homoheptamer of alpha chains or a 500 kDa complex of 6 alpha chains and 1 beta chain. The central body of the alpha chain homomer supports tentacles, each with the binding site for C4b at the end.

Its subcellular location is the secreted. In terms of biological role, controls the classical pathway of complement activation. It binds as a cofactor to C3b/C4b inactivator (C3bINA), which then hydrolyzes the complement fragment C4b. It also accelerates the degradation of the C4bC2a complex (C3 convertase) by dissociating the complement fragment C2a. It also interacts with anticoagulant protein S and with serum amyloid P component. The beta chain binds protein S. The chain is C4b-binding protein beta chain (C4BPB) from Homo sapiens (Human).